Reading from the N-terminus, the 89-residue chain is MVMTAEAKAKVIEEYQTKPGDTGSPEVQVALLTARIKYLTDHFKTHKKDFHSRTGLLKMVGQRRNILKYLKSKDVQRYRDLIARLGLRK.

Belongs to the universal ribosomal protein uS15 family. In terms of assembly, part of the 30S ribosomal subunit. Forms a bridge to the 50S subunit in the 70S ribosome, contacting the 23S rRNA.

Its function is as follows. One of the primary rRNA binding proteins, it binds directly to 16S rRNA where it helps nucleate assembly of the platform of the 30S subunit by binding and bridging several RNA helices of the 16S rRNA. In terms of biological role, forms an intersubunit bridge (bridge B4) with the 23S rRNA of the 50S subunit in the ribosome. The protein is Small ribosomal subunit protein uS15 of Maridesulfovibrio salexigens (strain ATCC 14822 / DSM 2638 / NCIMB 8403 / VKM B-1763) (Desulfovibrio salexigens).